The sequence spans 205 residues: dITP/XTP pyrophosphatase (205 aa).

7-12 (SNNRGK) contacts substrate. Residues E39 and D68 each coordinate Mg(2+). Residue D68 is the Proton acceptor of the active site. Residues A69, 154-157 (FGFD), K177, and 182-183 (HR) contribute to the substrate site.

Belongs to the HAM1 NTPase family. Homodimer. Mg(2+) is required as a cofactor.

The catalysed reaction is XTP + H2O = XMP + diphosphate + H(+). The enzyme catalyses dITP + H2O = dIMP + diphosphate + H(+). It carries out the reaction ITP + H2O = IMP + diphosphate + H(+). Pyrophosphatase that catalyzes the hydrolysis of nucleoside triphosphates to their monophosphate derivatives, with a high preference for the non-canonical purine nucleotides XTP (xanthosine triphosphate), dITP (deoxyinosine triphosphate) and ITP. Seems to function as a house-cleaning enzyme that removes non-canonical purine nucleotides from the nucleotide pool, thus preventing their incorporation into DNA/RNA and avoiding chromosomal lesions. The chain is dITP/XTP pyrophosphatase from Acidovorax ebreus (strain TPSY) (Diaphorobacter sp. (strain TPSY)).